The following is a 178-amino-acid chain: Protein GrpE (178 aa).

2 stretches are compositionally biased toward basic and acidic residues: residues 1–19 and 30–42; these read MAKHKQEEHPEDVEVKEEA and SPEKSELELANER. Residues 1–42 form a disordered region; it reads MAKHKQEEHPEDVEVKEEAVETAEQAESASPEKSELELANER.

Belongs to the GrpE family. Homodimer.

It localises to the cytoplasm. In terms of biological role, participates actively in the response to hyperosmotic and heat shock by preventing the aggregation of stress-denatured proteins, in association with DnaK and GrpE. It is the nucleotide exchange factor for DnaK and may function as a thermosensor. Unfolded proteins bind initially to DnaJ; upon interaction with the DnaJ-bound protein, DnaK hydrolyzes its bound ATP, resulting in the formation of a stable complex. GrpE releases ADP from DnaK; ATP binding to DnaK triggers the release of the substrate protein, thus completing the reaction cycle. Several rounds of ATP-dependent interactions between DnaJ, DnaK and GrpE are required for fully efficient folding. The protein is Protein GrpE of Streptococcus sanguinis (strain SK36).